The primary structure comprises 835 residues: Ion-translocating oxidoreductase complex subunit C (835 aa).

4Fe-4S ferredoxin-type domains lie at 368–397 and 407–436; these read YAPPAPEQSCIRCSACSDACPVSLMPQQLY and KSEEYALKDCIECGLCAYVCPSHIPLIQYF. [4Fe-4S] cluster contacts are provided by cysteine 377, cysteine 380, cysteine 383, cysteine 387, cysteine 416, cysteine 419, cysteine 422, and cysteine 426. The segment covering 468 to 489 has biased composition (basic and acidic residues); that stretch reads AREEQERKARAQKAMEARRQEM. 7 disordered regions span residues 468–492, 540–574, 586–618, 634–666, 682–714, 730–762, and 778–811; these read AREEQERKARAQKAMEARRQEMKTA, QRKARRLARQQQTQNTDVSQVETNEENKSTDSKSA, KAAQQGSALEKDEISSSDTLSVGNDTEPVAEDP, KAAQQGSAVEKDEISSSNTLSVGNDTEPVADDP, KAAQQGSAVEQDEISSSDTLSIGNEAEPVADDP, KAAQQRSAVEQDEISSSDTLSVGNETESVAEDP, and KAAQQRSAVEQDEISSSDTLSVGNETESVAEDPR. Residues 552-561 show a composition bias toward polar residues; that stretch reads TQNTDVSQVE. Polar residues predominate over residues 648-657; sequence SSSNTLSVGN. Composition is skewed to polar residues over residues 745-756 and 793-804; these read SSDTLSVGNETE.

It belongs to the 4Fe4S bacterial-type ferredoxin family. RnfC subfamily. The complex is composed of six subunits: RnfA, RnfB, RnfC, RnfD, RnfE and RnfG. The cofactor is [4Fe-4S] cluster.

The protein localises to the cell inner membrane. Part of a membrane-bound complex that couples electron transfer with translocation of ions across the membrane. The protein is Ion-translocating oxidoreductase complex subunit C of Pasteurella multocida (strain Pm70).